Reading from the N-terminus, the 99-residue chain is UPF0122 protein UUR10_0158 (99 aa).

It belongs to the UPF0122 family.

Functionally, might take part in the signal recognition particle (SRP) pathway. This is inferred from the conservation of its genetic proximity to ftsY/ffh. May be a regulatory protein. In Ureaplasma urealyticum serovar 10 (strain ATCC 33699 / Western), this protein is UPF0122 protein UUR10_0158.